The following is a 1006-amino-acid chain: MGVPSFFRWLSRKYPKIISPVLEEQPQIVDGVILPLDYSASNPNGELDNLYLDMNGIVHPCSHPENKPPPETEDEMLLAVFEYTNRVLNMARPRKVLVMAVDGVAPRAKMNQQRARRFRSARDAQIENEAREEIMRQREEVGEIIDDAVRNKKTWDSNAITPGTPFMDKLAAALRYWTAFKLATDPGWKNLQVIISDATVPGEGEHKIMNFIRSQRADPEYNPNTTHCIYGLDADLIFLGLATHEPHFKILREDVFAQDNRKRNNLKDTINMTEEEKQFLQKQNSEQPFLWLHINVLREYLSAELWVPGLPFTFDLERAIDDWVFMCFFCGNDFLPHLPCLDVRENSIDILLDIWKVVLPKLKTYMTCDGVLNLPSVETLLQHLGSREGDIFKTRHIQEARKKEAFERRKAQKNMSKGQDRHPTVATEQLQMYDTQGNLAKGSWNLTTSDMVRLKKELMLANEGNEEAIAKVKQQSDKNNELMKDISKEEIDDAVSKANKTNFNLAEVMKQKIINKKHRLEKDNEEEEIAKDSKKVKTEKAESECDLDAEIKDEIVADVNDRENSETTEVSRDSPVHSTVNVSEGPKNGVFDTDEFVKLFEPGYHERYYTAKFHVTPQDIEQLRKDMVKCYIEGVAWVLMYYYQGCASWNWFYPYHYAPLATDFHGFSHLEIKFEEGTPFLPYEQLMSVLPAASGHALPKIFRSLMSEPDSEIIDFYPEEFPIDMNGKKMSWQGIALLPFIDQDRLLTAVRAQYPLLSDAERARNIRGEPVLLISNKNANYERFSKKLYSKENNNNNVVVKFQHFKSGLSGIVSKDVEGFELNGKIVCPIQGGSLPNLSTTLILKMSYRLIPLPSRNKSIILNGFIPSEPVLTAYDLDSIMYKYNNQNYSRRWNFGNDLKQNIVPVGPKGITQYKPRTGGYRAFFYFAELSRNNVQPAHNYGRNSYNSQPGFNNSRYDGGNNNYRQNSNYRNNNYSGNRNSGQYSGNSYSRNNKQSRYDNSRANRR.

Coiled-coil stretches lie at residues 256 to 287 and 453 to 544; these read FAQD…NSEQ and RLKK…AESE. The segment at 492 to 529 is required for retention in the nucleus; it reads DDAVSKANKTNFNLAEVMKQKIINKKHRLEKDNEEEEI. Basic and acidic residues predominate over residues 561–575; it reads DRENSETTEVSRDSP. 2 disordered regions span residues 561–584 and 939–1006; these read DREN…NVSE and HNYG…ANRR. Position 574 is a phosphoserine (serine 574). A compositionally biased stretch (polar residues) spans 939–956; it reads HNYGRNSYNSQPGFNNSR. 6 consecutive repeat copies span residues 955–958, 961–964, 972–974, 975–978, 984–986, and 996–999. The interval 955–999 is 2 X 4 AA repeats of S-R-Y-D, N-N-N-Y, Y-S-G-N; the sequence is SRYDGGNNNYRQNSNYRNNNYSGNRNSGQYSGNSYSRNNKQSRYD. The segment covering 959–993 has biased composition (low complexity); the sequence is GGNNNYRQNSNYRNNNYSGNRNSGQYSGNSYSRNN. The segment covering 996–1006 has biased composition (basic and acidic residues); it reads SRYDNSRANRR.

This sequence belongs to the 5'-3' exonuclease family. XRN2/RAT1 subfamily. In terms of assembly, interacts with RAI1 and RTT103. Mg(2+) serves as cofactor. Mn(2+) is required as a cofactor.

It is found in the nucleus. Its activity is regulated as follows. Inhibited by nucleoside 3', 5'-bisphosphates. Functionally, possesses 5'-&gt;3' exoribonuclease activity. Required for the processing of nuclear mRNA, rRNA and small nucleolar RNA (snoRNA) precursors. May promote termination of transcription by RNA polymerase II via the recruitment of 3'-end processing factors to the poly(A) site and by the degradation of nascent RNA downstream of the poly(A) site. This is 5'-3' exoribonuclease 2 (RAT1) from Saccharomyces cerevisiae (strain ATCC 204508 / S288c) (Baker's yeast).